The chain runs to 445 residues: Chromosome partition protein MukF (445 aa).

The leucine-zipper stretch occupies residues 213-241 (LSETSSTLRELQDTLQAASDELQTQILDI).

Belongs to the MukF family. In terms of assembly, interacts, and probably forms a ternary complex, with MukE and MukB via its C-terminal region. The complex formation is stimulated by calcium or magnesium. It is required for an interaction between MukE and MukB.

Its subcellular location is the cytoplasm. It is found in the nucleoid. Functionally, involved in chromosome condensation, segregation and cell cycle progression. May participate in facilitating chromosome segregation by condensation DNA from both sides of a centrally located replisome during cell division. Not required for mini-F plasmid partitioning. Probably acts via its interaction with MukB and MukE. Overexpression results in anucleate cells. It has a calcium binding activity. This chain is Chromosome partition protein MukF, found in Vibrio campbellii (strain ATCC BAA-1116).